Reading from the N-terminus, the 103-residue chain is N(4)-acetylcytidine amidohydrolase (103 aa).

The ASCH domain maps to 6-94; sequence ITFFQRFQDD…IAGIYPDQTQ (89 aa). K21 (proton acceptor) is an active-site residue. Catalysis depends on T24, which acts as the Nucleophile. The Proton donor role is filled by E74.

Belongs to the N(4)-acetylcytidine amidohydrolase family.

It catalyses the reaction N(4)-acetylcytidine + H2O = cytidine + acetate + H(+). It carries out the reaction N(4)-acetyl-2'-deoxycytidine + H2O = 2'-deoxycytidine + acetate + H(+). The enzyme catalyses N(4)-acetylcytosine + H2O = cytosine + acetate + H(+). Catalyzes the hydrolysis of N(4)-acetylcytidine (ac4C). This chain is N(4)-acetylcytidine amidohydrolase, found in Citrobacter koseri (strain ATCC BAA-895 / CDC 4225-83 / SGSC4696).